Here is a 198-residue protein sequence, read N- to C-terminus: UPF0301 protein Tfu_2389 (198 aa).

Belongs to the UPF0301 (AlgH) family.

The chain is UPF0301 protein Tfu_2389 from Thermobifida fusca (strain YX).